Here is a 240-residue protein sequence, read N- to C-terminus: Ubiquinone biosynthesis O-methyltransferase (240 aa).

S-adenosyl-L-methionine contacts are provided by R36, G66, D87, and M129.

Belongs to the methyltransferase superfamily. UbiG/COQ3 family.

The enzyme catalyses a 3-demethylubiquinol + S-adenosyl-L-methionine = a ubiquinol + S-adenosyl-L-homocysteine + H(+). The catalysed reaction is a 3-(all-trans-polyprenyl)benzene-1,2-diol + S-adenosyl-L-methionine = a 2-methoxy-6-(all-trans-polyprenyl)phenol + S-adenosyl-L-homocysteine + H(+). Its pathway is cofactor biosynthesis; ubiquinone biosynthesis. Functionally, O-methyltransferase that catalyzes the 2 O-methylation steps in the ubiquinone biosynthetic pathway. This Pelagibacter ubique (strain HTCC1062) protein is Ubiquinone biosynthesis O-methyltransferase.